The chain runs to 88 residues: Small ribosomal subunit protein uS17 (88 aa).

It belongs to the universal ribosomal protein uS17 family. As to quaternary structure, part of the 30S ribosomal subunit.

Its function is as follows. One of the primary rRNA binding proteins, it binds specifically to the 5'-end of 16S ribosomal RNA. This Nitratidesulfovibrio vulgaris (strain DSM 19637 / Miyazaki F) (Desulfovibrio vulgaris) protein is Small ribosomal subunit protein uS17.